A 375-amino-acid chain; its full sequence is Growth/differentiation factor 8 (375 aa).

A signal peptide spans 1-18; sequence MQKLQIFVYIYLFVLIVA. The propeptide occupies 19 to 266; the sequence is GPVDLNENSE…VTDTPKRSRR (248 aa). N-linked (GlcNAc...) asparagine glycosylation is found at asparagine 48 and asparagine 71. Intrachain disulfides connect cysteine 272–cysteine 282, cysteine 281–cysteine 340, cysteine 309–cysteine 372, and cysteine 313–cysteine 374.

It belongs to the TGF-beta family. As to quaternary structure, homodimer; disulfide-linked. Interacts with WFIKKN2, leading to inhibit its activity. Interacts with FSTL3. Synthesized as large precursor molecule that undergoes proteolytic cleavage to generate an N-terminal propeptide and a disulfide linked C-terminal dimer, which is the biologically active molecule. The circulating form consists of a latent complex of the C-terminal dimer and other proteins, including its propeptide, which maintain the C-terminal dimer in a latent, inactive state. Ligand activation requires additional cleavage of the prodomain by a tolloid-like metalloproteinase.

Its subcellular location is the secreted. Its function is as follows. Acts specifically as a negative regulator of skeletal muscle growth. This is Growth/differentiation factor 8 (MSTN) from Aepyceros melampus (Impala).